A 207-amino-acid polypeptide reads, in one-letter code: Ubiquitin-conjugating enzyme E2 E3 (207 aa).

Basic and acidic residues predominate over residues 1–10 (MSSDRQRSDD). The tract at residues 1–63 (MSSDRQRSDD…KTTAKLSTSA (63 aa)) is disordered. Residue serine 2 is modified to N-acetylserine. Residue serine 8 is modified to Phosphoserine. Low complexity predominate over residues 50–63 (KLSSKTTAKLSTSA). A UBC core domain is found at 61 to 207 (TSAKRIQKEL…ARQWTKRYAT (147 aa)). Residue cysteine 145 is the Glycyl thioester intermediate of the active site.

Belongs to the ubiquitin-conjugating enzyme family. The ubiquitin-loaded form interacts specifically with importin-11 (IPO11), leading to its import into the nucleus. Interacts with NEDD4L.

The protein localises to the nucleus. It is found in the cytoplasm. It carries out the reaction S-ubiquitinyl-[E1 ubiquitin-activating enzyme]-L-cysteine + [E2 ubiquitin-conjugating enzyme]-L-cysteine = [E1 ubiquitin-activating enzyme]-L-cysteine + S-ubiquitinyl-[E2 ubiquitin-conjugating enzyme]-L-cysteine.. Its pathway is protein modification; protein ubiquitination. Functionally, accepts ubiquitin from the E1 complex and catalyzes its covalent attachment to other proteins. In vitro catalyzes 'Lys-11'- and 'Lys-48'-, as well as 'Lys-63'-linked polyubiquitination. Participates in the regulation of transepithelial sodium transport in renal cells. This Bos taurus (Bovine) protein is Ubiquitin-conjugating enzyme E2 E3 (UBE2E3).